The primary structure comprises 476 residues: Trigger factor (476 aa).

The region spanning 169-254 (GDKVTLDYVG…VKEVAAAEEL (86 aa)) is the PPIase FKBP-type domain. A disordered region spans residues 437-476 (SRDELLAEDEAEGEEKKAAGETKKKAAPKKKAAKKESAAE). Basic and acidic residues predominate over residues 450–460 (EEKKAAGETKK).

This sequence belongs to the FKBP-type PPIase family. Tig subfamily.

The protein localises to the cytoplasm. The catalysed reaction is [protein]-peptidylproline (omega=180) = [protein]-peptidylproline (omega=0). Its function is as follows. Involved in protein export. Acts as a chaperone by maintaining the newly synthesized protein in an open conformation. Functions as a peptidyl-prolyl cis-trans isomerase. The protein is Trigger factor of Chelativorans sp. (strain BNC1).